A 218-amino-acid chain; its full sequence is Glutathione S-transferase A (218 aa).

Position 1 is an N-acetylserine (serine 1). The GST N-terminal domain occupies 2 to 82; the sequence is GKPVLHYFNV…YIATKYNLYG (81 aa). Lysine 3 carries the post-translational modification N6-succinyllysine. Glutathione-binding positions include tyrosine 8, lysine 44, 53-54, and 66-67; these read QV and QS. Residues 84 to 206 form the GST C-terminal domain; it reads DTKERLLIDM…LQPGSQRKPF (123 aa).

The protein belongs to the GST superfamily. Alpha family. As to quaternary structure, homodimer or heterodimer of GSTA1 and GSTA2.

It localises to the cytoplasm. The catalysed reaction is RX + glutathione = an S-substituted glutathione + a halide anion + H(+). It carries out the reaction prostaglandin A2 + glutathione = prostaglandin A2-S-(R)-glutathione. The enzyme catalyses prostaglandin J2 + glutathione = prostaglandin J2-S-(R)-glutathione. It catalyses the reaction (13S)-hydroperoxy-(9Z,11E)-octadecadienoate + 2 glutathione = (13S)-hydroxy-(9Z,11E)-octadecadienoate + glutathione disulfide + H2O. The catalysed reaction is androst-5-ene-3,17-dione = androst-4-ene-3,17-dione. Glutathione S-transferase that catalyzes the nucleophilic attack of the sulfur atom of glutathione on the electrophilic groups of a wide range of exogenous and endogenous compounds. Involved in the formation of glutathione conjugates of both prostaglandin A2 (PGA2) and prostaglandin J2 (PGJ2). It also catalyzes the isomerization of D5-androstene-3,17-dione (AD) into D4-androstene-3,17-dione and may therefore play an important role in hormone biosynthesis. Through its glutathione-dependent peroxidase activity toward the fatty acid hydroperoxide (13S)-hydroperoxy-(9Z,11E)-octadecadienoate/13-HPODE it is also involved in the metabolism of oxidized linoleic acid. The protein is Glutathione S-transferase A of Cavia porcellus (Guinea pig).